The chain runs to 334 residues: 3-ketodihydrosphingosine reductase (334 aa).

An N-terminal signal peptide occupies residues 1–20 (MIIYILFSLLAAVIVHLVYK). Residues glycine 36, serine 38, serine 39, glycine 40, arginine 62, lysine 66, aspartate 100, and isoleucine 101 each contribute to the NADPH site. A GXSXG motif is present at residues 36–40 (GGSSG). Serine 182 acts as the Proton donor in catalysis. Tyrosine 196 serves as the catalytic Proton acceptor. Positions 196 and 200 each coordinate NADP(+). Catalysis depends on lysine 200, which acts as the Lowers pKa of active site Tyr.

It belongs to the short-chain dehydrogenases/reductases (SDR) family.

Its subcellular location is the endoplasmic reticulum. It catalyses the reaction sphinganine + NADP(+) = 3-oxosphinganine + NADPH + H(+). Its pathway is lipid metabolism; sphingolipid metabolism. Its function is as follows. Catalyzes the reduction of 3'-oxosphinganine (3-ketodihydrosphingosine/KDS) to sphinganine (dihydrosphingosine/DHS), the second step of de novo sphingolipid biosynthesis. The chain is 3-ketodihydrosphingosine reductase (ksrA-1) from Dictyostelium discoideum (Social amoeba).